The primary structure comprises 296 residues: Bifunctional protein FolD (296 aa).

Residues 166 to 168 (GRS), S195, and T236 contribute to the NADP(+) site.

Belongs to the tetrahydrofolate dehydrogenase/cyclohydrolase family. In terms of assembly, homodimer.

The catalysed reaction is (6R)-5,10-methylene-5,6,7,8-tetrahydrofolate + NADP(+) = (6R)-5,10-methenyltetrahydrofolate + NADPH. The enzyme catalyses (6R)-5,10-methenyltetrahydrofolate + H2O = (6R)-10-formyltetrahydrofolate + H(+). It functions in the pathway one-carbon metabolism; tetrahydrofolate interconversion. Its function is as follows. Catalyzes the oxidation of 5,10-methylenetetrahydrofolate to 5,10-methenyltetrahydrofolate and then the hydrolysis of 5,10-methenyltetrahydrofolate to 10-formyltetrahydrofolate. In Dehalococcoides mccartyi (strain ATCC BAA-2100 / JCM 16839 / KCTC 5957 / BAV1), this protein is Bifunctional protein FolD.